A 572-amino-acid chain; its full sequence is MKGKAMTDKDIRHRSKIYDSMVKSPNRAMLRATGMTDKDFETPIVGVISTWAENTPCNIHLHDLGKLAKEGIKAEGAWPVQYGTITVADGIAMGTPGMRFSLTSRDIIADSIEAAMGGHNVDAFVAIGGCDKNMPGSMIAIANMDIPAVFAYGGTIAPGKLDGKDIDLVSVFEGIGKWNHGDLTAEEVRRIECNACPGPGGCGGMYTANTMATAIEVLGMSLPGSSSHPAESKDKQEDIEAAGRAVVKMLKMGLKPSDILTREAFEDAITVTMALGGSTNATLHLLAMAHAANVELTLDDFNVIQEKVPHLADLKPSGQYVFQDLYEVGGVPAVMKYLLANGFLHGDRITCTGKTVAENLVEFADLTPGQKVIMPLENPKRADGPLIILHGNLAPDGAVAKVSGVKVRRHVGPAKVFDSEEAAIDAVLADEVVDGDVVVVRYVGPKGGPGMPEMLSLSSIIVGKGQGDKVALLTDGRFSGGTYGLVVGHIAPEAQDGGPIAYLRTGDMVTVDQDTKEISMAVSDEELAKRKAETTIPPLYSRGVLGKYAHMVSSAAKGAVTDFWKPEETGKK.

Cys-57 is a binding site for [2Fe-2S] cluster. Asp-89 is a Mg(2+) binding site. Cys-130 provides a ligand contact to [2Fe-2S] cluster. The Mg(2+) site is built by Asp-131 and Lys-132. Position 132 is an N6-carboxylysine (Lys-132). [2Fe-2S] cluster is bound at residue Cys-202. Glu-453 is a Mg(2+) binding site. Ser-479 serves as the catalytic Proton acceptor.

This sequence belongs to the IlvD/Edd family. Homodimer. Requires [2Fe-2S] cluster as cofactor. Mg(2+) serves as cofactor.

It carries out the reaction (2R)-2,3-dihydroxy-3-methylbutanoate = 3-methyl-2-oxobutanoate + H2O. The catalysed reaction is (2R,3R)-2,3-dihydroxy-3-methylpentanoate = (S)-3-methyl-2-oxopentanoate + H2O. It functions in the pathway amino-acid biosynthesis; L-isoleucine biosynthesis; L-isoleucine from 2-oxobutanoate: step 3/4. It participates in amino-acid biosynthesis; L-valine biosynthesis; L-valine from pyruvate: step 3/4. Functionally, functions in the biosynthesis of branched-chain amino acids. Catalyzes the dehydration of (2R,3R)-2,3-dihydroxy-3-methylpentanoate (2,3-dihydroxy-3-methylvalerate) into 2-oxo-3-methylpentanoate (2-oxo-3-methylvalerate) and of (2R)-2,3-dihydroxy-3-methylbutanoate (2,3-dihydroxyisovalerate) into 2-oxo-3-methylbutanoate (2-oxoisovalerate), the penultimate precursor to L-isoleucine and L-valine, respectively. In Streptococcus sanguinis (strain SK36), this protein is Dihydroxy-acid dehydratase.